The primary structure comprises 248 residues: Probable transcriptional regulatory protein Acid345_2125 (248 aa).

The protein belongs to the TACO1 family.

It localises to the cytoplasm. The chain is Probable transcriptional regulatory protein Acid345_2125 from Koribacter versatilis (strain Ellin345).